Consider the following 323-residue polypeptide: tRNA U34 carboxymethyltransferase (323 aa).

Carboxy-S-adenosyl-L-methionine contacts are provided by residues K91, W105, K110, G130, 181–182 (IE), M196, Y200, and R315.

It belongs to the class I-like SAM-binding methyltransferase superfamily. CmoB family. As to quaternary structure, homotetramer.

The catalysed reaction is carboxy-S-adenosyl-L-methionine + 5-hydroxyuridine(34) in tRNA = 5-carboxymethoxyuridine(34) in tRNA + S-adenosyl-L-homocysteine + H(+). Its function is as follows. Catalyzes carboxymethyl transfer from carboxy-S-adenosyl-L-methionine (Cx-SAM) to 5-hydroxyuridine (ho5U) to form 5-carboxymethoxyuridine (cmo5U) at position 34 in tRNAs. The chain is tRNA U34 carboxymethyltransferase from Serratia proteamaculans (strain 568).